The following is a 218-amino-acid chain: Cytidylate kinase (218 aa).

7-15 (GPSASGKSS) is an ATP binding site.

It belongs to the cytidylate kinase family. Type 1 subfamily.

It localises to the cytoplasm. It catalyses the reaction CMP + ATP = CDP + ADP. The catalysed reaction is dCMP + ATP = dCDP + ADP. The sequence is that of Cytidylate kinase from Borrelia duttonii (strain Ly).